A 1310-amino-acid chain; its full sequence is Angiotensin-converting enzyme (1310 aa).

An N-terminal signal peptide occupies residues 1–33 (MGAAPGRRGPRLLRPPPPLLLLLLLLRPPPAAL). The Extracellular segment spans residues 34 to 1260 (TLDPGLLPGD…GMNLDAQQAR (1227 aa)). Peptidase M2 domains lie at 45–628 (AADE…LGWP) and 647–1226 (VTDE…LGWP). N-linked (GlcNAc...) asparagine glycosylation is found at N59, N79, and N151. A disulfide bond links C162 and C170. Y236 is a chloride binding site. N323 is a glycosylation site (N-linked (GlcNAc...) asparagine). C364 and C382 are disulfide-bonded. H395 contacts Zn(2+). E396 functions as the Proton acceptor 1 in the catalytic mechanism. Zn(2+)-binding residues include H399 and E422. 2 N-linked (GlcNAc...) asparagine glycosylation sites follow: N449 and N513. H524 (proton donor 1) is an active-site residue. R533 is a binding site for chloride. The cysteines at positions 549 and 561 are disulfide-linked. N-linked (GlcNAc...) asparagine glycosylation is found at N681, N699, and N718. A disulfide bridge connects residues C761 and C767. Residues R795 and Y833 each contribute to the chloride site. N-linked (GlcNAc...) asparagine glycosylation occurs at N946. C961 and C979 are oxidised to a cystine. H992 provides a ligand contact to Zn(2+). Residue E993 is the Proton acceptor 2 of the active site. Residues H996 and E1020 each contribute to the Zn(2+) site. W1094 and R1098 together coordinate chloride. Residue H1122 is the Proton donor 2 of the active site. A chloride-binding site is contributed by R1131. C1147 and C1159 form a disulfide bridge. Residue N1195 is glycosylated (N-linked (GlcNAc...) asparagine). Residues 1219–1260 (HGEKLGWPQYTWTPNSARSEGSLPDSGRVNFLGMNLDAQQAR) are juxtamembrane stalk. The chain crosses the membrane as a helical span at residues 1261–1281 (VGQWVLLFLGVALLLASLGLT). The Cytoplasmic portion of the chain corresponds to 1282 to 1310 (QRLFSIRYQSLRQPHHGPQFGSEVELRHS). At S1303 the chain carries Phosphoserine.

Belongs to the peptidase M2 family. In terms of assembly, monomer and homodimer; homodimerizes following binding to an inhibitor. Interacts with calmodulin (CALM1, CALM2 or CALM3); interaction takes place in the cytoplasmic region and regulates phosphorylation and proteolytic cleavage. Requires Zn(2+) as cofactor. It depends on chloride as a cofactor. N-glycosylated. Post-translationally, phosphorylated by CK2 on Ser-1303; which allows membrane retention. Phosphorylated on tyrosine residues on its extracellular part, promoting cleavage by secretase enzymes and formation of the soluble form (Angiotensin-converting enzyme, soluble form). In terms of processing, produced following proteolytic cleavage by secretase enzymes that cleave the transmembrane form in the juxtamembrane stalk region upstream of the transmembrane region. Cleavage can take place at different sites of the juxtamembrane stalk region. Testis-specific isoform is expressed in spermatocytes, adult testis.

It localises to the cell membrane. The protein localises to the cytoplasm. The protein resides in the secreted. The catalysed reaction is Release of a C-terminal dipeptide, oligopeptide-|-Xaa-Yaa, when Xaa is not Pro, and Yaa is neither Asp nor Glu. Thus, conversion of angiotensin I to angiotensin II, with increase in vasoconstrictor activity, but no action on angiotensin II.. It carries out the reaction angiotensin I + H2O = L-histidyl-L-leucine + angiotensin II. It catalyses the reaction bradykinin + H2O = L-Phe-L-Arg + bradykinin(1-7). The enzyme catalyses substance P + H2O = substance P(1-9) + L-Leu-L-Met-NH2. The catalysed reaction is substance P + H2O = substance P(1-8) + Gly-L-Leu-L-Met-NH2. It carries out the reaction substance P + H2O = L-Phe-L-Phe-Gly-L-Leu-L-Met-NH2 + substance P(1-6). It catalyses the reaction neurotensin + H2O = neurotensin(1-11) + L-isoleucyl-L-leucine. The enzyme catalyses goralatide + H2O = N-acetyl-L-seryl-L-aspartate + L-lysyl-L-proline. The catalysed reaction is Met-enkephalin + H2O = L-phenylalanyl-L-methionine + L-tyrosylglycylglycine. It carries out the reaction Leu-enkephalin + H2O = L-tyrosylglycylglycine + L-phenylalanyl-L-leucine. It catalyses the reaction Met-enkephalin-Arg-Phe + H2O = L-arginyl-L-phenylalanine + Met-enkephalin. With respect to regulation, the dipeptidyl carboxypeptidase activity is strongly activated by chloride. Specifically inhibited by lisinopril. Inhibited by mixanpril, an orally-active drug used for the treatment of hypertension. Its activity is regulated as follows. Strongly inhibited by lisinopril and captopril. Dipeptidyl carboxypeptidase that removes dipeptides from the C-terminus of a variety of circulating hormones, such as angiotensin I, bradykinin or enkephalins, thereby playing a key role in the regulation of blood pressure, electrolyte homeostasis or synaptic plasticity. Composed of two similar catalytic domains, each possessing a functional active site, with different selectivity for substrates. Plays a major role in the angiotensin-renin system that regulates blood pressure and sodium retention by the kidney by converting angiotensin I to angiotensin II, resulting in an increase of the vasoconstrictor activity of angiotensin. Also able to inactivate bradykinin, a potent vasodilator, and therefore enhance the blood pressure response. Acts as a regulator of synaptic transmission by mediating cleavage of neuropeptide hormones, such as substance P, neurotensin or enkephalins. Catalyzes degradation of different enkephalin neuropeptides (Met-enkephalin, Leu-enkephalin, Met-enkephalin-Arg-Phe and possibly Met-enkephalin-Arg-Gly-Leu). Acts as a regulator of synaptic plasticity in the nucleus accumbens of the brain by mediating cleavage of Met-enkephalin-Arg-Phe, a strong ligand of Mu-type opioid receptor OPRM1, into Met-enkephalin. Met-enkephalin-Arg-Phe cleavage by ACE decreases activation of OPRM1, leading to long-term synaptic potentiation of glutamate release. Also acts as a regulator of hematopoietic stem cell differentiation by mediating degradation of hemoregulatory peptide N-acetyl-SDKP (AcSDKP). Acts as a regulator of cannabinoid signaling pathway by mediating degradation of hemopressin, an antagonist peptide of the cannabinoid receptor CNR1. Involved in amyloid-beta metabolism by catalyzing degradation of Amyloid-beta protein 40 and Amyloid-beta protein 42 peptides, thereby preventing plaque formation. Catalyzes cleavage of cholecystokinin (maturation of Cholecystokinin-8 and Cholecystokinin-5) and Gonadoliberin-1 (both maturation and degradation) hormones. Degradation of hemoregulatory peptide N-acetyl-SDKP (AcSDKP) and amyloid-beta proteins is mediated by the N-terminal catalytic domain, while angiotensin I and cholecystokinin cleavage is mediated by the C-terminal catalytic region. In terms of biological role, soluble form that is released in blood plasma and other body fluids following proteolytic cleavage in the juxtamembrane stalk region. Its function is as follows. Isoform produced by alternative promoter usage that is specifically expressed in spermatocytes and adult testis, and which is required for male fertility. In contrast to somatic isoforms, only contains one catalytic domain. Acts as a dipeptidyl carboxypeptidase that removes dipeptides from the C-terminus of substrates. The identity of substrates that are needed for male fertility is unknown. May also have a glycosidase activity which releases GPI-anchored proteins from the membrane by cleaving the mannose linkage in the GPI moiety. The GPIase activity was reported to be essential for the egg-binding ability of the sperm. This activity is however unclear and has been challenged by other groups, suggesting that it may be indirect. The polypeptide is Angiotensin-converting enzyme (Oryctolagus cuniculus (Rabbit)).